Consider the following 92-residue polypeptide: Small ribosomal subunit protein uS19 (92 aa).

It belongs to the universal ribosomal protein uS19 family.

Protein S19 forms a complex with S13 that binds strongly to the 16S ribosomal RNA. This is Small ribosomal subunit protein uS19 from Corynebacterium aurimucosum (strain ATCC 700975 / DSM 44827 / CIP 107346 / CN-1) (Corynebacterium nigricans).